The primary structure comprises 196 residues: Segregation and condensation protein B (196 aa).

Belongs to the ScpB family. As to quaternary structure, homodimer. Homodimerization may be required to stabilize the binding of ScpA to the Smc head domains. Component of a cohesin-like complex composed of ScpA, ScpB and the Smc homodimer, in which ScpA and ScpB bind to the head domain of Smc. The presence of the three proteins is required for the association of the complex with DNA.

It is found in the cytoplasm. In terms of biological role, participates in chromosomal partition during cell division. May act via the formation of a condensin-like complex containing Smc and ScpA that pull DNA away from mid-cell into both cell halves. The polypeptide is Segregation and condensation protein B (Lactobacillus johnsonii (strain CNCM I-12250 / La1 / NCC 533)).